We begin with the raw amino-acid sequence, 364 residues long: Protein L-Myc (364 aa).

Disordered stretches follow at residues 41 to 81 (TSPP…HSKG), 111 to 172 (DRLA…EIDV), and 219 to 285 (PPES…KRKN). Basic and acidic residues predominate over residues 228-245 (ASERGPQEEVLERDAAGE). Residues 281–333 (TKRKNHNFLERKRRNDLRSRFLALRDQVPTLASCSKAPKVVILSKALEYLQAL) enclose the bHLH domain. The interval 333–361 (LVGAEKRMATEKRQLRCRQQQLQKRIAYL) is leucine-zipper.

In terms of assembly, efficient DNA binding requires dimerization with another bHLH protein. Binds DNA as a heterodimer with MAX.

Its subcellular location is the nucleus. The protein is Protein L-Myc (MYCL) of Homo sapiens (Human).